The sequence spans 428 residues: GTPase Obg (428 aa).

In terms of domain architecture, Obg spans 1–158 (MFVDQVKVYV…RDVILELKVL (158 aa)). Residues 118–145 (KGGRGGRGNSRFATPANPAPQLSENGEP) form a disordered region. The OBG-type G domain maps to 159 to 329 (ADVGLVGFPS…LLFEIANQLE (171 aa)). Residues 165-172 (GFPSVGKS), 190-194 (FTTLV), 212-215 (DLPG), 282-285 (NKMD), and 310-312 (SAI) contribute to the GTP site. Mg(2+) contacts are provided by Ser172 and Thr192. An OCT domain is found at 350-428 (RFDEGDAPFE…LLEFEFEFID (79 aa)).

Belongs to the TRAFAC class OBG-HflX-like GTPase superfamily. OBG GTPase family. Monomer. The cofactor is Mg(2+).

Its subcellular location is the cytoplasm. In terms of biological role, an essential GTPase which binds GTP, GDP and possibly (p)ppGpp with moderate affinity, with high nucleotide exchange rates and a fairly low GTP hydrolysis rate. Plays a role in control of the cell cycle, stress response, ribosome biogenesis and in those bacteria that undergo differentiation, in morphogenesis control. This is GTPase Obg from Bacillus pumilus (strain SAFR-032).